The following is a 738-amino-acid chain: DNA ligase (738 aa).

Residues 48–52 (DVVYD), 97–98 (SL), and glutamate 136 contribute to the NAD(+) site. Lysine 138 (N6-AMP-lysine intermediate) is an active-site residue. Residues arginine 159, glutamate 196, lysine 356, and lysine 380 each coordinate NAD(+). Cysteine 474, cysteine 477, cysteine 492, and cysteine 497 together coordinate Zn(2+). In terms of domain architecture, BRCT spans 659 to 738 (QLPQPLAGKT…SQLLELLEET (80 aa)).

Belongs to the NAD-dependent DNA ligase family. LigA subfamily. It depends on Mg(2+) as a cofactor. Mn(2+) serves as cofactor.

The enzyme catalyses NAD(+) + (deoxyribonucleotide)n-3'-hydroxyl + 5'-phospho-(deoxyribonucleotide)m = (deoxyribonucleotide)n+m + AMP + beta-nicotinamide D-nucleotide.. Its function is as follows. DNA ligase that catalyzes the formation of phosphodiester linkages between 5'-phosphoryl and 3'-hydroxyl groups in double-stranded DNA using NAD as a coenzyme and as the energy source for the reaction. It is essential for DNA replication and repair of damaged DNA. In Cyanothece sp. (strain PCC 7425 / ATCC 29141), this protein is DNA ligase.